Consider the following 249-residue polypeptide: Undecaprenyl-diphosphatase (249 aa).

Transmembrane regions (helical) follow at residues 11–31 (GLTE…TAIF), 35–55 (PDVG…VIFV), 74–94 (ITLS…GIFF), 101–121 (IFSE…FMLL), 135–155 (IPYL…LPGI), 175–195 (AVKY…VLEM), 208–228 (FIVA…MVIA), and 229–249 (GKLK…IFYI).

Belongs to the UppP family.

Its subcellular location is the cell membrane. The catalysed reaction is di-trans,octa-cis-undecaprenyl diphosphate + H2O = di-trans,octa-cis-undecaprenyl phosphate + phosphate + H(+). Functionally, catalyzes the dephosphorylation of undecaprenyl diphosphate (UPP). The protein is Undecaprenyl-diphosphatase of Methanococcus vannielii (strain ATCC 35089 / DSM 1224 / JCM 13029 / OCM 148 / SB).